A 132-amino-acid polypeptide reads, in one-letter code: DNA-directed RNA polymerase subunit omega (132 aa).

The interval 90 to 109 (SSEAGGVLGTSSEEEGSSFD) is disordered.

Belongs to the RNA polymerase subunit omega family. The RNAP catalytic core consists of 2 alpha, 1 beta, 1 beta' and 1 omega subunit. When a sigma factor is associated with the core the holoenzyme is formed, which can initiate transcription.

It carries out the reaction RNA(n) + a ribonucleoside 5'-triphosphate = RNA(n+1) + diphosphate. Functionally, promotes RNA polymerase assembly. Latches the N- and C-terminal regions of the beta' subunit thereby facilitating its interaction with the beta and alpha subunits. The sequence is that of DNA-directed RNA polymerase subunit omega from Bartonella henselae (strain ATCC 49882 / DSM 28221 / CCUG 30454 / Houston 1) (Rochalimaea henselae).